Consider the following 286-residue polypeptide: Ribosomal RNA small subunit methyltransferase H (286 aa).

S-adenosyl-L-methionine-binding positions include 30-32 (GGH), Asp-49, Phe-88, Asp-97, and Gln-104. The tract at residues 260-286 (HPLQPSDEESFNNPASRSAKLRALEMR) is disordered.

The protein belongs to the methyltransferase superfamily. RsmH family.

It is found in the cytoplasm. The catalysed reaction is cytidine(1402) in 16S rRNA + S-adenosyl-L-methionine = N(4)-methylcytidine(1402) in 16S rRNA + S-adenosyl-L-homocysteine + H(+). Specifically methylates the N4 position of cytidine in position 1402 (C1402) of 16S rRNA. In Solibacter usitatus (strain Ellin6076), this protein is Ribosomal RNA small subunit methyltransferase H.